The primary structure comprises 983 residues: 26S proteasome regulatory subunit RPN1 (983 aa).

Positions 1 to 26 (MSTDKKKEEVPKPETEDLTVKDETKN) are enriched in basic and acidic residues. Disordered stretches follow at residues 1–44 (MSTD…EDQK) and 169–188 (VEKE…QPPH). PC repeat units lie at residues 415–447 (SAVA…EVKA), 448–484 (GGLL…KIST), 485–519 (AAIL…SLEL), 520–557 (AAIA…ELKS), and 563–595 (LALS…MTSA). Disordered regions lie at residues 625 to 644 (AVKS…SQED) and 662 to 724 (EPQG…GAND). Acidic residues predominate over residues 630–642 (DEDEDEDNEELSQ). Residues 688 to 705 (NVKKEENEEEKTEKSEKT) show a composition bias toward basic and acidic residues. Positions 706–718 (ENDEEEEDEEESK) are enriched in acidic residues. PC repeat units follow at residues 768–799 (LAMG…DVSM) and 800–834 (NSIF…EQDA).

Belongs to the proteasome subunit S2 family.

Acts as a regulatory subunit of the 26 proteasome which is involved in the ATP-dependent degradation of ubiquitinated proteins. The sequence is that of 26S proteasome regulatory subunit RPN1 (RPN1) from Candida glabrata (strain ATCC 2001 / BCRC 20586 / JCM 3761 / NBRC 0622 / NRRL Y-65 / CBS 138) (Yeast).